A 710-amino-acid chain; its full sequence is MFDIHTVEIEWAGRPLKLETGKIARQADGAVMATYGETVVLATVVSAKSPKPGQDFFPLTVNYQEKTYAAGKIPGGYFKREGRPSEKETLVSRLIDRPIRPLFPEGYKNDTQVVVTVIQHDLENDPDILSMVATSAALTLSGVPFMGPIGGARVGYINGEYVLNPHLDEMDESSLDLVVAGTQEAVLMVESEAKELSEDVMLGAVMFGHRGFQPVIDAIIKLAEVAAKEPRDFQPEDHSALEAEMLSIAEGELRTAYKNTQKAERYAAVDAVKAKVKAHFFPEGVEPKYSAEVIGAVFKHLQAKIVRWNILDTKSRIDGRDLSTVRAIVSEVGVLPRTHGSSLFTRGETQAIVVATLGTGEDEQYVDSLTGMYKERFLLHYNFPPYSVGETGRMGSPGRREIGHGKLAWRAVRPMLPTAEQFPYTLRVVSEITESNGSSSMATVCGTSLALMDAGVPLAKPVAGIAMGLIKEDERFAVLSDILGDEDHLGDMDFKVAGTDGGITALQMDIKIEGITEEIMNVALNQAKGGRLHILGEMAKAISESRGQLGEFAPRIEVMNIPVDKIREVIGSGGKVIREIVEKTGAKINIEDDGTVKIASSSGKEIEAARKWIHSIVAEPEVGQIYEGTVVKTADFGAFVNFFGARDGLVHISQLASERVAKTQDVVKEGDKVWVKLLGFDERGKVRLSMKVVDQATGQELAAKKDDAAE.

Mg(2+) contacts are provided by Asp487 and Asp493. Residues Pro554 to Ile613 enclose the KH domain. Residues Gly623–Lys691 enclose the S1 motif domain.

It belongs to the polyribonucleotide nucleotidyltransferase family. Mg(2+) serves as cofactor.

The protein resides in the cytoplasm. The catalysed reaction is RNA(n+1) + phosphate = RNA(n) + a ribonucleoside 5'-diphosphate. Its function is as follows. Involved in mRNA degradation. Catalyzes the phosphorolysis of single-stranded polyribonucleotides processively in the 3'- to 5'-direction. This Rhizobium rhizogenes (strain K84 / ATCC BAA-868) (Agrobacterium radiobacter) protein is Polyribonucleotide nucleotidyltransferase.